The chain runs to 254 residues: 3-deoxy-manno-octulosonate cytidylyltransferase (254 aa).

It belongs to the KdsB family.

It localises to the cytoplasm. It carries out the reaction 3-deoxy-alpha-D-manno-oct-2-ulosonate + CTP = CMP-3-deoxy-beta-D-manno-octulosonate + diphosphate. It functions in the pathway nucleotide-sugar biosynthesis; CMP-3-deoxy-D-manno-octulosonate biosynthesis; CMP-3-deoxy-D-manno-octulosonate from 3-deoxy-D-manno-octulosonate and CTP: step 1/1. It participates in bacterial outer membrane biogenesis; lipopolysaccharide biosynthesis. In terms of biological role, activates KDO (a required 8-carbon sugar) for incorporation into bacterial lipopolysaccharide in Gram-negative bacteria. The polypeptide is 3-deoxy-manno-octulosonate cytidylyltransferase (Pseudoalteromonas atlantica (strain T6c / ATCC BAA-1087)).